We begin with the raw amino-acid sequence, 320 residues long: Ribosome production factor 2 homolog (320 aa).

Residues 30–234 enclose the Brix domain; it reads RTMLFLDGRK…IRRTKIASED (205 aa). A disordered region spans residues 268-320; the sequence is LGKQQTGSIQTRRVKALRKTPEEKKENRQRKKVALKAAAAEALASQGNNPFSS. Over residues 302–311 the composition is skewed to low complexity; the sequence is LKAAAAEALA.

It belongs to the RPF2 family.

Its subcellular location is the nucleus. The protein localises to the nucleolus. Its function is as follows. Required for normal assembly of the mitotic spindle. May be involved in both centrosome-dependent and centrosome-independent spindle assembly programs. The protein is Ribosome production factor 2 homolog of Drosophila melanogaster (Fruit fly).